Consider the following 221-residue polypeptide: Glutathione S-transferase alpha-3 (221 aa).

The GST N-terminal domain maps to G3–G83. The residue at position 4 (K4) is an N6-succinyllysine. Glutathione-binding positions include Y9, R45, Q54–V55, and Q67–T68. The GST C-terminal domain maps to D85–L207.

It belongs to the GST superfamily. Alpha family. As to quaternary structure, heterodimer of YC1 and YC2.

It is found in the cytoplasm. The catalysed reaction is RX + glutathione = an S-substituted glutathione + a halide anion + H(+). It carries out the reaction androst-5-ene-3,17-dione = androst-4-ene-3,17-dione. The enzyme catalyses pregn-5-ene-3,20-dione = progesterone. In terms of biological role, conjugation of reduced glutathione to a wide number of exogenous and endogenous hydrophobic electrophiles. Catalyzes isomerization reactions that contribute to the biosynthesis of steroid hormones. Efficiently catalyze obligatory double-bond isomerizations of delta(5)-androstene-3,17-dione and delta(5)-pregnene-3,20-dione, precursors to testosterone and progesterone, respectively. Has substantial activity toward aflatoxin B1-8,9-epoxide. In Rattus norvegicus (Rat), this protein is Glutathione S-transferase alpha-3.